Reading from the N-terminus, the 332-residue chain is DNA-directed RNA polymerase subunit alpha (332 aa).

Residues 1 to 231 (MVREKVTVST…DLFIPFLHME (231 aa)) are alpha N-terminal domain (alpha-NTD). Residues 262 to 332 (LSLESLFIDQ…FALDLPKNLN (71 aa)) are alpha C-terminal domain (alpha-CTD).

It belongs to the RNA polymerase alpha chain family. In terms of assembly, in plastids the minimal PEP RNA polymerase catalytic core is composed of four subunits: alpha, beta, beta', and beta''. When a (nuclear-encoded) sigma factor is associated with the core the holoenzyme is formed, which can initiate transcription.

It localises to the plastid. The catalysed reaction is RNA(n) + a ribonucleoside 5'-triphosphate = RNA(n+1) + diphosphate. Its function is as follows. DNA-dependent RNA polymerase catalyzes the transcription of DNA into RNA using the four ribonucleoside triphosphates as substrates. This chain is DNA-directed RNA polymerase subunit alpha, found in Cuscuta japonica (Japanese dodder).